The following is a 597-amino-acid chain: MSSPTSVEEDGDIKLKTRFHGQVVVLYARPPLILDDFFALLRDACKQHAKQDITVKWIDEDGDPISIDSQMELDEAVRCLNVSQEAELNIHVFVGKPELPGLPCQGEDKTVYRRGARRWKKIYLYNGHRFQGKRLNRRIQCFICHDYIWGIGRQGFRCVDCRLCVHKKCHRHVRTHCGQTPQGPNVPVAPSSGVGSLRGGRLDTSSSTTRSGGGIDNGAFHEHEIESPGSAKDMSRSTNGNGASKWAVSLNDFRLLTVIGRGSYAKVVQAEHIATRQIYAIKIIKKEMFNEDEDIDWVQTEKSVFEAASNYPFLVGLHSCFQTESRLFFVIEFVPGGDLMFHMQQQRRLPEEHARFYSGEIILALHFLHSRGIIYRDLKLDNVLIDAEGHIKLTDYGMCKENINAGDLTSTFCGTPNYIAPEILRGDEYGFSVDWWALGVLMFEMMAGRSPFDIVGMQNSEENTEDYLFQIILERQIRIPRSLSVRASNILKGFLNKDPSQRLGCKLDINDGLNDMKEHDFFRGFIDWEALEQKAVAPPYHPAVESDRDLTHFDHQFTDEPPQLSPDNSAVIARIDQSEFDGFEYVNPLQMSREDSV.

Positions D12–G95 constitute a PB1 domain. The Phorbol-ester/DAG-type zinc finger occupies G127–C177. The disordered stretch occupies residues P181–T238. In terms of domain architecture, Protein kinase spans F253 to F522. ATP is bound by residues I259–V267 and K282. The active-site Proton acceptor is the D377. The region spanning G524–D595 is the AGC-kinase C-terminal domain.

This sequence belongs to the protein kinase superfamily. AGC Ser/Thr protein kinase family. PKC subfamily. Interaction with par-3 required for the peripheral localization of par-6 and to form a par-3/par-6/pkc-3 complex, which is activated when cdc-42 interacts with par-6. Binds avidly to the phosphotyrosine interaction domain (PID) of a novel pkc-3 adapter protein num-1, which enables tethering and targeting of pkc-3 to the cell periphery. Mg(2+) serves as cofactor.

Its subcellular location is the cytoplasm. The protein resides in the cytoskeleton. It carries out the reaction L-seryl-[protein] + ATP = O-phospho-L-seryl-[protein] + ADP + H(+). It catalyses the reaction L-threonyl-[protein] + ATP = O-phospho-L-threonyl-[protein] + ADP + H(+). In terms of biological role, required for the normal progression of embryogenesis and viability of the organism. Plays an indispensable role in establishing embryonic polarity and in recruiting and maintaining par-6 to the periphery, through interaction with par-3. Required for epithelial cell polarity in the distal spermatheca. Phosphorylates serine residues of num-1. Required for the expression of antimicrobial peptide nlp-29 in response in response to fungal infection or physical injury. The polypeptide is Protein kinase C-like 3 (Caenorhabditis briggsae).